Here is a 62-residue protein sequence, read N- to C-terminus: Potassium channel toxin alpha-KTx Tx308 (62 aa).

An N-terminal signal peptide occupies residues 1-18 (MQKLFIVLLLFCILRLDA). Cystine bridges form between cysteine 28-cysteine 46, cysteine 33-cysteine 59, and cysteine 37-cysteine 61.

The protein belongs to the short scorpion toxin superfamily. Potassium channel inhibitor family. Alpha-KTx 23 subfamily. In terms of tissue distribution, expressed by the venom gland.

It is found in the secreted. Functionally, may block potassium channels. In Buthus israelis (Israeli scorpion), this protein is Potassium channel toxin alpha-KTx Tx308.